A 99-amino-acid chain; its full sequence is U2-theraphotoxin-Lsp1a (99 aa).

Positions 1–22 (MNTIQVIIFAVVLVLTVTVGQA) are cleaved as a signal peptide. The propeptide occupies 23–57 (DEDSPEASLLRKLKEAEASLFGQNLEESRNSRQKR). Intrachain disulfides connect C58/C73, C65/C78, and C72/C93.

This sequence belongs to the neurotoxin 14 (magi-1) family. 08 (Ltx-4) subfamily. As to expression, expressed by the venom gland.

It is found in the secreted. Insecticidal neurotoxin. The sequence is that of U2-theraphotoxin-Lsp1a from Lasiodora sp. (strain IBSP 8539) (Brazilian salmon pink birdeater).